The primary structure comprises 204 residues: Ras-related protein RabQ (204 aa).

GTP is bound at residue 12-19; sequence GPPFVGKS. Residues 34-42 carry the Effector region motif; it reads MDTTIGVEF. Residues 60 to 64 and 118 to 121 each bind GTP; these read DTAGQ and NKCD. 2 S-geranylgeranyl cysteine lipidation sites follow: Cys-202 and Cys-203.

Belongs to the small GTPase superfamily. Rab family.

It is found in the cell membrane. The chain is Ras-related protein RabQ (rabQ) from Dictyostelium discoideum (Social amoeba).